A 552-amino-acid polypeptide reads, in one-letter code: Non-structural protein NS1 (552 aa).

This sequence belongs to the orbivirus non-structural protein NS1 family.

This Epizootic hemorrhagic disease virus 2 (strain Alberta) (EHDV-2) protein is Non-structural protein NS1 (Segment-5).